The sequence spans 283 residues: K88 fimbrial protein AC (283 aa).

The first 21 residues, 1–21, serve as a signal peptide directing secretion; that stretch reads MKKTLIALAIAASAASGMAHA.

The protein belongs to the fimbrial K88 protein family. As to quaternary structure, K88 fimbria, 0.1-1 micrometer in length and 7 nanometers in diameter, is composed of about 100 identical subunits.

The protein localises to the fimbrium. Its function is as follows. K88 major fimbrial subunit. Fimbriae (also called pili), are polar filaments radiating from the surface of the bacterium to a length of 0.5-1.5 micrometers and numbering 100-300 per cell. They enable bacteria to colonize the epithelium of specific host organs. This is K88 fimbrial protein AC (faeG) from Escherichia coli.